The sequence spans 171 residues: Ribosome maturation factor RimM (171 aa).

The 75-residue stretch at 96–170 (AEGEYYYHEI…LVTIHVMEGL (75 aa)) folds into the PRC barrel domain.

It belongs to the RimM family. As to quaternary structure, binds ribosomal protein uS19.

The protein resides in the cytoplasm. Functionally, an accessory protein needed during the final step in the assembly of 30S ribosomal subunit, possibly for assembly of the head region. Essential for efficient processing of 16S rRNA. May be needed both before and after RbfA during the maturation of 16S rRNA. It has affinity for free ribosomal 30S subunits but not for 70S ribosomes. In Bacillus cereus (strain G9842), this protein is Ribosome maturation factor RimM.